The primary structure comprises 302 residues: Succinate--CoA ligase [ADP-forming] subunit alpha (302 aa).

CoA-binding positions include 17–20 (TGST), lysine 43, and 96–98 (ITE). Substrate is bound at residue tyrosine 159. Histidine 247 functions as the Tele-phosphohistidine intermediate in the catalytic mechanism.

Belongs to the succinate/malate CoA ligase alpha subunit family. As to quaternary structure, heterotetramer of two alpha and two beta subunits.

It catalyses the reaction succinate + ATP + CoA = succinyl-CoA + ADP + phosphate. It carries out the reaction GTP + succinate + CoA = succinyl-CoA + GDP + phosphate. The protein operates within carbohydrate metabolism; tricarboxylic acid cycle; succinate from succinyl-CoA (ligase route): step 1/1. Succinyl-CoA synthetase functions in the citric acid cycle (TCA), coupling the hydrolysis of succinyl-CoA to the synthesis of either ATP or GTP and thus represents the only step of substrate-level phosphorylation in the TCA. The alpha subunit of the enzyme binds the substrates coenzyme A and phosphate, while succinate binding and nucleotide specificity is provided by the beta subunit. This Staphylococcus epidermidis (strain ATCC 12228 / FDA PCI 1200) protein is Succinate--CoA ligase [ADP-forming] subunit alpha.